A 353-amino-acid chain; its full sequence is UPF0283 membrane protein YPA_1696 (353 aa).

3 consecutive transmembrane segments (helical) span residues 71 to 91, 101 to 121, and 214 to 234; these read MVTAGMVILGASVIAQSVQWV, IALGATTAGGLIILAGVGSVV, and ESALMIAVSPLALVDMAFIAW.

Belongs to the UPF0283 family.

The protein resides in the cell inner membrane. This chain is UPF0283 membrane protein YPA_1696, found in Yersinia pestis bv. Antiqua (strain Antiqua).